The chain runs to 703 residues: MARELRMLLLWGRRLRAPALAAACGGKPVLCPWRPPAQSWGPPRSLASSFHVGRPFSSQAAEDQAEAGPLHSVISSLEAVQGSATKHEFQAETKKLLDIVARSLYSEKEVFIRELISNASDALEKLRHKLVSEGQALPDMEIHLQTDADRGTITIQDTGVGMSREELVSNLGTIARSGSKAFLDALQNQAEAGSKIIGQFGVGFYSAFMVADRVEVYSRSVDAGSLGYRWLSDGSGVFEVAEASGVRTGTKIIIHLKADSREFASEARVRDVVTKYSNFVSFPLYLNGRRMNTLQAIWMMDPKDVGEGQHEEFYRYVAQAHDRPRYTLHYRTDAPLSIRSIFYVPDAKPSMFDVSRELGSSVSLYSRKVLIQTKATNILPTWLRFVRGVVDSEDIPLNLSRELLQESALIRKLQGVLQQRLIKFFTDQSKKDAEKYARFFEDYGLFVREGIVTTAEQEVKEDIAKLLRYESSALPAGQLTSLSDYASRMQAGTRNIYYLCAPNRHLAEHSPYYEAMKRKNTEVLFCYEQFDELTLLHLREFDKKKLISVETDIVVDHYKEEKFEDGAPAGDCLSEKETEDLMAWMRNALGSRITDVKVTLRLDTHPAMITVLEMGAARHFLRMRQLAKTQEERAQLLQPTLEINPRHVLIKKLSQLRDSEPDLAQLLVDQIYENAMITAGLIDDPRPMVGRLNQLLVKALERH.

Residues 1 to 56 (MARELRMLLLWGRRLRAPALAAACGGKPVLCPWRPPAQSWGPPRSLASSFHVGRPF) constitute a mitochondrion transit peptide. Asn118 and Asp157 together coordinate ATP. Ser169 is subject to Phosphoserine. ATP is bound at residue Asn170. At Thr173 the chain carries Phosphothreonine. ATP is bound by residues Phe204 and Arg401. Residues Lys423, Lys430, and Lys465 each carry the N6-acetyllysine modification. Thr493 is modified (phosphothreonine).

The protein belongs to the heat shock protein 90 family. As to quaternary structure, binds to the intracellular domain of tumor necrosis factor type 1 receptor. Binds to RB1. Interacts with SRC. Interacts with SDHA.

Its subcellular location is the mitochondrion. It localises to the mitochondrion inner membrane. The protein resides in the mitochondrion matrix. Chaperone that expresses an ATPase activity. Involved in maintaining mitochondrial function and polarization, downstream of PINK1 and mitochondrial complex I. Is a negative regulator of mitochondrial respiration able to modulate the balance between oxidative phosphorylation and aerobic glycolysis. The impact of TRAP1 on mitochondrial respiration is probably mediated by modulation of mitochondrial SRC and inhibition of SDHA. The sequence is that of Heat shock protein 75 kDa, mitochondrial (TRAP1) from Bos taurus (Bovine).